A 174-amino-acid chain; its full sequence is Large ribosomal subunit protein uL18 (174 aa).

Belongs to the universal ribosomal protein uL18 family. As to quaternary structure, part of the 50S ribosomal subunit. Contacts the 5S and 23S rRNAs.

Functionally, this is one of the proteins that bind and probably mediate the attachment of the 5S RNA into the large ribosomal subunit, where it forms part of the central protuberance. This is Large ribosomal subunit protein uL18 from Methanosarcina mazei (strain ATCC BAA-159 / DSM 3647 / Goe1 / Go1 / JCM 11833 / OCM 88) (Methanosarcina frisia).